The chain runs to 395 residues: Imidazolonepropionase (395 aa).

Positions 63 and 65 each coordinate Fe(3+). Zn(2+) contacts are provided by His-63 and His-65. 3 residues coordinate 4-imidazolone-5-propanoate: Arg-72, Tyr-135, and His-168. Tyr-135 provides a ligand contact to N-formimidoyl-L-glutamate. Residue His-233 participates in Fe(3+) binding. His-233 is a Zn(2+) binding site. Residue Gln-236 participates in 4-imidazolone-5-propanoate binding. Asp-308 lines the Fe(3+) pocket. Asp-308 lines the Zn(2+) pocket. Residues Asn-310 and Gly-312 each coordinate N-formimidoyl-L-glutamate. Thr-313 lines the 4-imidazolone-5-propanoate pocket.

Belongs to the metallo-dependent hydrolases superfamily. HutI family. The cofactor is Zn(2+). Fe(3+) is required as a cofactor.

It is found in the cytoplasm. The catalysed reaction is 4-imidazolone-5-propanoate + H2O = N-formimidoyl-L-glutamate. The protein operates within amino-acid degradation; L-histidine degradation into L-glutamate; N-formimidoyl-L-glutamate from L-histidine: step 3/3. Its function is as follows. Catalyzes the hydrolytic cleavage of the carbon-nitrogen bond in imidazolone-5-propanoate to yield N-formimidoyl-L-glutamate. It is the third step in the universal histidine degradation pathway. The sequence is that of Imidazolonepropionase from Cereibacter sphaeroides (strain ATCC 17029 / ATH 2.4.9) (Rhodobacter sphaeroides).